A 465-amino-acid polypeptide reads, in one-letter code: UDP-glycosyltransferase 89A2 (465 aa).

UDP-alpha-D-glucose-binding positions include S291, 342 to 344 (VSQ), 359 to 367 (HCGWNSVLE), and 381 to 384 (EADQ).

Belongs to the UDP-glycosyltransferase family.

Its function is as follows. Glucosyltransferase that glucosylates benzoates and benzoate derivatives in vitro. The protein is UDP-glycosyltransferase 89A2 (UGT89A2) of Arabidopsis thaliana (Mouse-ear cress).